Here is a 1402-residue protein sequence, read N- to C-terminus: Eukaryotic translation initiation factor 4 gamma 1 (1402 aa).

Disordered stretches follow at residues 1–123 and 165–402; these read MSGA…SPEP and HEPN…YEYK. Residues threonine 11 and threonine 27 each carry the phosphothreonine modification. Residues 53 to 64 show a composition bias toward low complexity; the sequence is GPEHSPSESQPS. Over residues 65–76 the composition is skewed to pro residues; it reads SPSPTPSPPPIL. Serine 120 is modified (phosphoserine). The span at 238 to 251 shows a compositional bias: low complexity; sequence ASATPPAVPSATPA. Acidic residues predominate over residues 261 to 275; the sequence is QEEEGEEEEEEEEGE. Basic and acidic residues-rich tracts occupy residues 280–290 and 324–340; these read ESDKGGEDLHP and KELNKKEAVGDLLDAFK. Residues 359 to 370 show a composition bias toward low complexity; the sequence is PTPESEGSSGPS. Positions 379–388 are enriched in basic and acidic residues; sequence WDAKEDKIHN. Threonine 452 carries the post-translational modification Phosphothreonine. 4 disordered regions span residues 476–517, 536–563, 600–636, and 828–1028; these read ANLG…PPKG, AEKAWKPSSKRTAADKDRGEEDADGSKT, SKGSLTSSLRRPFQNPTSQWPSQHVPLPHGAESATTE, and MAKG…KREA. Positions 479–488 are enriched in low complexity; sequence GRPALSSRGP. An omega-N-methylarginine mark is found at arginine 490 and arginine 499. Over residues 547-563 the composition is skewed to basic and acidic residues; it reads TAADKDRGEEDADGSKT. The MIF4G domain maps to 567–793; it reads FRRVRSILNK…QDVLDLRQSN (227 aa). Positions 602 to 621 are enriched in polar residues; sequence GSLTSSLRRPFQNPTSQWPS. At serine 832 the chain carries Phosphoserine. Omega-N-methylarginine occurs at positions 836 and 846. Phosphoserine occurs at positions 881 and 896. Residues 892–913 show a composition bias toward low complexity; it reads GGRLSWGKGSSGSGAKPSDAAS. Lysine 899 carries the post-translational modification N6-acetyllysine. Polar residues predominate over residues 918–937; sequence PATSTLNRFSALQQAVPTES. Phosphoserine is present on residues serine 948 and serine 950. Basic and acidic residues predominate over residues 949-981; the sequence is LSRERGGKAGEPRRRLERSERGGDRGDRLDRAR. Position 988 is a phosphoserine; by PKC/PRKCA (serine 988). Over residues 989–1028 the composition is skewed to basic and acidic residues; that stretch reads FSKEVEERSRERPSQPEGLRKAASLTEDRDRGRDAAKREA. 3 positions are modified to phosphoserine: serine 990, serine 997, and serine 1012. Phosphothreonine is present on threonine 1014. 2 positions are modified to phosphoserine: serine 1034 and serine 1041. The MI domain occupies 1044 to 1166; the sequence is ELEKKSKAII…PMGELFREIT (123 aa). Positions 1231–1401 constitute a W2 domain; it reads EESEAPGQRA…REVEEEESDH (171 aa). Serine 1399 is modified (phosphoserine).

Belongs to the eukaryotic initiation factor 4G family. EIF4F is a multi-subunit complex, the composition of which varies with external and internal environmental conditions. It is composed of at least EIF4A, EIF4E (cap-binding) and EIF4G1/EIF4G3. Interacts with eIF3 complex, mutually exclusive with EIF4A1 or EIF4A2, EIF4E and through its N-terminus with PABPC1. Interacts with EIF4E or with EIF1 (mutually exclusive) through a common binding site. Interacts through its C-terminus with the serine/threonine kinases MKNK1, and with MKNK2. Appears to act as a scaffold protein, holding these enzymes in place to phosphorylate EIF4E. Non-phosphorylated EIF4EBP1 competes with EIF4G1/EIF4G3 to interact with EIF4E; insulin stimulated MAP-kinase (MAPK1 and MAPK3) phosphorylation of EIF4EBP1 causes dissociation of the complex allowing EIF4G1/EIF4G3 to bind and consequent initiation of translation. EIF4G1/EIF4G3 interacts with PABPC1 to bring about circularization of the mRNA. Interacts with EIF4E3. Interacts with CIRBP and MIF4GD. Interacts with RBM4. Interacts with HNRNPD/AUF1; the interaction requires RNA. Interacts with DDX3X; the interaction requires RNA. Interacts with DAZAP2. Phosphorylated at multiple sites in vivo. Phosphorylation at Ser-988 by PRKCA induces binding to MKNK1.

It localises to the cytoplasm. Its subcellular location is the nucleus. It is found in the stress granule. Functionally, component of the protein complex eIF4F, which is involved in the recognition of the mRNA cap, ATP-dependent unwinding of 5'-terminal secondary structure and recruitment of mRNA to the ribosome. Exists in two complexes, either with EIF1 or with EIF4E (mutually exclusive). Together with EIF1, is required for leaky scanning, in particular for avoiding cap-proximal start codon. Together with EIF4E, antagonizes the scanning promoted by EIF1-EIF4G1 and locates the start codon (through a TISU element) without scanning. As a member of the eIF4F complex, required for endoplasmic reticulum stress-induced ATF4 mRNA translation. The sequence is that of Eukaryotic translation initiation factor 4 gamma 1 (EIF4G1) from Oryctolagus cuniculus (Rabbit).